Reading from the N-terminus, the 273-residue chain is 2,3,4,5-tetrahydropyridine-2,6-dicarboxylate N-succinyltransferase (273 aa).

Arg104 and Asp141 together coordinate substrate.

Belongs to the transferase hexapeptide repeat family. Homotrimer.

It is found in the cytoplasm. It carries out the reaction (S)-2,3,4,5-tetrahydrodipicolinate + succinyl-CoA + H2O = (S)-2-succinylamino-6-oxoheptanedioate + CoA. Its pathway is amino-acid biosynthesis; L-lysine biosynthesis via DAP pathway; LL-2,6-diaminopimelate from (S)-tetrahydrodipicolinate (succinylase route): step 1/3. This chain is 2,3,4,5-tetrahydropyridine-2,6-dicarboxylate N-succinyltransferase, found in Laribacter hongkongensis (strain HLHK9).